Reading from the N-terminus, the 238-residue chain is Probable transcriptional regulatory protein SpyM51586 (238 aa).

Belongs to the TACO1 family. YeeN subfamily.

The protein localises to the cytoplasm. This chain is Probable transcriptional regulatory protein SpyM51586, found in Streptococcus pyogenes serotype M5 (strain Manfredo).